We begin with the raw amino-acid sequence, 307 residues long: Small ribosomal subunit biogenesis GTPase RsgA (307 aa).

Residues 80–237 (KADLRQTIVS…IVDTPGIKEF (158 aa)) enclose the CP-type G domain. GTP contacts are provided by residues 129–132 (NKID) and 180–188 (GQSGVGKSS). 4 residues coordinate Zn(2+): cysteine 261, cysteine 266, histidine 268, and cysteine 274.

Belongs to the TRAFAC class YlqF/YawG GTPase family. RsgA subfamily. Monomer. Associates with 30S ribosomal subunit, binds 16S rRNA. It depends on Zn(2+) as a cofactor.

The protein resides in the cytoplasm. Its function is as follows. One of several proteins that assist in the late maturation steps of the functional core of the 30S ribosomal subunit. Helps release RbfA from mature subunits. May play a role in the assembly of ribosomal proteins into the subunit. Circularly permuted GTPase that catalyzes slow GTP hydrolysis, GTPase activity is stimulated by the 30S ribosomal subunit. This is Small ribosomal subunit biogenesis GTPase RsgA from Borreliella burgdorferi (strain ATCC 35210 / DSM 4680 / CIP 102532 / B31) (Borrelia burgdorferi).